Here is a 385-residue protein sequence, read N- to C-terminus: Spermidine/putrescine import ATP-binding protein PotA (385 aa).

Residues alanine 27 to alanine 257 enclose the ABC transporter domain. Glycine 59–threonine 66 is a binding site for ATP.

The protein belongs to the ABC transporter superfamily. Spermidine/putrescine importer (TC 3.A.1.11.1) family. The complex is composed of two ATP-binding proteins (PotA), two transmembrane proteins (PotB and PotC) and a solute-binding protein (PotD).

It localises to the cell inner membrane. The catalysed reaction is ATP + H2O + polyamine-[polyamine-binding protein]Side 1 = ADP + phosphate + polyamineSide 2 + [polyamine-binding protein]Side 1.. In terms of biological role, part of the ABC transporter complex PotABCD involved in spermidine/putrescine import. Responsible for energy coupling to the transport system. The sequence is that of Spermidine/putrescine import ATP-binding protein PotA from Methylococcus capsulatus (strain ATCC 33009 / NCIMB 11132 / Bath).